We begin with the raw amino-acid sequence, 849 residues long: Serine/threonine-protein phosphatase 4 regulatory subunit 3B (849 aa).

The region spanning 1 to 100 (MSDTRRRVKV…DEIWEKICQV (100 aa)) is the WH1 domain. Residues Ser117 and Ser695 each carry the phosphoserine modification. Positions 714–724 (EMWFNEDEEEE) are enriched in acidic residues. Residues 714–849 (EMWFNEDEEE…SPRKRPRLGS (136 aa)) form a disordered region. Positions 733 to 764 (EKPKPEDDFPDNYEKFMETKKAKESEDKENLP) are enriched in basic and acidic residues. The segment covering 776-818 (FSHSASAANGTNSKSVVAQIPPATSNGSSSKTTNLPTSVTATK) has biased composition (polar residues). A compositionally biased stretch (acidic residues) spans 827–838 (YPDDEEEDEEEE). Residue Ser840 is modified to Phosphoserine.

It belongs to the SMEK family. As to quaternary structure, serine/threonine-protein phosphatase 4 (PP4) occurs in different assemblies of the catalytic and one or more regulatory subunits. Component of the PP4 complex PPP4C-PPP4R2-PPP4R3B. In terms of tissue distribution, moderately expressed in tissues and specific brain regions examined.

Its subcellular location is the cytoplasm. The protein localises to the cytoskeleton. It is found in the microtubule organizing center. The protein resides in the centrosome. It localises to the nucleus. Functionally, regulatory subunit of serine/threonine-protein phosphatase 4 (PP4). May regulate the activity of PPP4C at centrosomal microtubule organizing centers. The polypeptide is Serine/threonine-protein phosphatase 4 regulatory subunit 3B (Homo sapiens (Human)).